Reading from the N-terminus, the 1299-residue chain is Phosphoribosylformylglycinamidine synthase (1299 aa).

ATP is bound by residues 310–321, 389–391, and Ala680; these read GAATGAGGEIRD and TGY. Asp681, Glu720, Asn724, and Asp888 together coordinate Mg(2+). Ser890 is an ATP binding site. One can recognise a Glutamine amidotransferase type-1 domain in the interval 1046–1299; it reads VAVLREQGVN…MFRNARVWLG (254 aa). Catalysis depends on Cys1139, which acts as the Nucleophile. Catalysis depends on residues His1264 and Glu1266.

It in the N-terminal section; belongs to the FGAMS family. In terms of assembly, monomer.

The protein localises to the cytoplasm. The enzyme catalyses N(2)-formyl-N(1)-(5-phospho-beta-D-ribosyl)glycinamide + L-glutamine + ATP + H2O = 2-formamido-N(1)-(5-O-phospho-beta-D-ribosyl)acetamidine + L-glutamate + ADP + phosphate + H(+). The protein operates within purine metabolism; IMP biosynthesis via de novo pathway; 5-amino-1-(5-phospho-D-ribosyl)imidazole from N(2)-formyl-N(1)-(5-phospho-D-ribosyl)glycinamide: step 1/2. In terms of biological role, phosphoribosylformylglycinamidine synthase involved in the purines biosynthetic pathway. Catalyzes the ATP-dependent conversion of formylglycinamide ribonucleotide (FGAR) and glutamine to yield formylglycinamidine ribonucleotide (FGAM) and glutamate. This chain is Phosphoribosylformylglycinamidine synthase, found in Myxococcus xanthus (strain DK1622).